Reading from the N-terminus, the 350-residue chain is Nuclear pore complex-interacting protein family member A1 (350 aa).

A disordered region spans residues 306–325 (KTPPECLLTPLPPSAPPSVD).

The protein belongs to the NPIP family. As to quaternary structure, may associate with the nuclear pore complex. Widely expressed.

Its subcellular location is the nucleus. It is found in the nuclear pore complex. It localises to the nucleus membrane. The polypeptide is Nuclear pore complex-interacting protein family member A1 (NPIPA1) (Homo sapiens (Human)).